The following is a 409-amino-acid chain: Secreted LysM effector Blys2 (409 aa).

The signal sequence occupies residues 1 to 20 (MTRFTTTLVAALAGANLAAA). The LysM 1 domain occupies 24–71 (YKWRAHAGDTCDSLSSDWSVQVSDFIKWNPSVGANCSNGVTAGQEYCV). N58 carries an N-linked (GlcNAc...) asparagine glycan. Residues 74–111 (NGAGSKPTTPPTGSPTTLTTAVTTASSTPTQPTDGAPS) form a disordered region. Low complexity predominate over residues 87 to 106 (SPTTLTTAVTTASSTPTQPT). 4 consecutive LysM domains span residues 129–176 (AWYK…YVCV), 206–253 (KWYK…FVCV), 283–330 (KFYK…YYCI), and 357–405 (KYYK…YICV).

It belongs to the secreted LysM effector family.

Its subcellular location is the secreted. The protein resides in the cell wall. Functionally, secreted effector that enables the plant pathogenic fungus to manipulate host defenses for successful infection. Required for the full virulence to infect insect hosts. In contrast to Blys5, Blys2 is not able to protect fungal hyphae against the hydrolytic activity of chitinase but plays an important role in evasion of insect immunities. Binds chitin. Coats and protects the cell walls of insect pathogens from host cell recognition. The sequence is that of Secreted LysM effector Blys2 from Beauveria bassiana (strain ARSEF 2860) (White muscardine disease fungus).